Reading from the N-terminus, the 116-residue chain is Ribosome-binding factor A (116 aa).

This sequence belongs to the RbfA family. Monomer. Binds 30S ribosomal subunits, but not 50S ribosomal subunits or 70S ribosomes.

It is found in the cytoplasm. Its function is as follows. One of several proteins that assist in the late maturation steps of the functional core of the 30S ribosomal subunit. Associates with free 30S ribosomal subunits (but not with 30S subunits that are part of 70S ribosomes or polysomes). Required for efficient processing of 16S rRNA. May interact with the 5'-terminal helix region of 16S rRNA. The protein is Ribosome-binding factor A of Streptococcus sanguinis (strain SK36).